The primary structure comprises 62 residues: Defensin-like protein A (62 aa).

The first 26 residues, M1–A26, serve as a signal peptide directing secretion. C42 and C52 are oxidised to a cystine.

Belongs to the DEFL family.

The protein resides in the secreted. Truncated and inactivated form of SCRA, a protein involved in male-mediated self-incompatibility when active. Most A.thaliana cultivars contain such an inactive form and thus, are self-fertiles. The chain is Defensin-like protein A (SCRA) from Arabidopsis thaliana (Mouse-ear cress).